The primary structure comprises 117 residues: Immunoglobulin heavy variable 4-28 (117 aa).

The signal sequence occupies residues 1 to 19 (MKHLWFFLLLVAAPRWVLS). The segment at 20-44 (QVQLQESGPGLVKPSDTLSLTCAVS) is framework-1. Residues 20-117 (QVQLQESGPG…VDTAVYYCAR (98 aa)) form the Ig-like domain. A disulfide bond links Cys-41 and Cys-115. Residues 45–53 (GYSISSSNW) are complementarity-determining-1. Positions 54–70 (WGWIRQPPGKGLEWIGY) are framework-2. The tract at residues 71 to 77 (IYYSGST) is complementarity-determining-2. Residues 78-115 (YYNPSLKSRVTMSVDTSKNQFSLKLSSVTAVDTAVYYC) are framework-3. Residues 116 to 117 (AR) are complementarity-determining-3.

As to quaternary structure, immunoglobulins are composed of two identical heavy chains and two identical light chains; disulfide-linked.

It is found in the secreted. Its subcellular location is the cell membrane. In terms of biological role, v region of the variable domain of immunoglobulin heavy chains that participates in the antigen recognition. Immunoglobulins, also known as antibodies, are membrane-bound or secreted glycoproteins produced by B lymphocytes. In the recognition phase of humoral immunity, the membrane-bound immunoglobulins serve as receptors which, upon binding of a specific antigen, trigger the clonal expansion and differentiation of B lymphocytes into immunoglobulins-secreting plasma cells. Secreted immunoglobulins mediate the effector phase of humoral immunity, which results in the elimination of bound antigens. The antigen binding site is formed by the variable domain of one heavy chain, together with that of its associated light chain. Thus, each immunoglobulin has two antigen binding sites with remarkable affinity for a particular antigen. The variable domains are assembled by a process called V-(D)-J rearrangement and can then be subjected to somatic hypermutations which, after exposure to antigen and selection, allow affinity maturation for a particular antigen. The protein is Immunoglobulin heavy variable 4-28 of Homo sapiens (Human).